Reading from the N-terminus, the 136-residue chain is 5-hydroxyisourate hydrolase (136 aa).

The first 22 residues, Met-1–Ala-22, serve as a signal peptide directing secretion. His-31, Arg-69, and Tyr-133 together coordinate substrate.

Belongs to the transthyretin family. 5-hydroxyisourate hydrolase subfamily. Homotetramer.

It localises to the periplasm. The catalysed reaction is 5-hydroxyisourate + H2O = 5-hydroxy-2-oxo-4-ureido-2,5-dihydro-1H-imidazole-5-carboxylate + H(+). Catalyzes the hydrolysis of 5-hydroxyisourate (HIU) to 2-oxo-4-hydroxy-4-carboxy-5-ureidoimidazoline (OHCU). This is 5-hydroxyisourate hydrolase (hiuH) from Salmonella dublin.